Consider the following 317-residue polypeptide: (2S)-3-sulfopropanediol dehydratase activating enzyme (317 aa).

Residues 18-306 enclose the Radical SAM core domain; sequence HDGPGLRTEL…QMLAEYFNQR (289 aa). The [4Fe-4S] cluster site is built by Cys-32, Cys-36, Cys-39, Cys-58, Cys-64, Cys-67, Cys-71, Cys-92, Cys-95, Cys-98, and Cys-102. 38–40 lines the S-adenosyl-L-methionine pocket; that stretch reads WCS. 4Fe-4S ferredoxin-type domains follow at residues 49-82 and 83-112; these read AQVG…FTRG and KLTS…LWGK. S-adenosyl-L-methionine-binding positions include Gly-142 and 191-193; that span reads DIK.

This sequence belongs to the organic radical-activating enzymes family. It depends on [4Fe-4S] cluster as a cofactor.

The catalysed reaction is glycyl-[protein] + reduced [flavodoxin] + S-adenosyl-L-methionine = glycin-2-yl radical-[protein] + semiquinone [flavodoxin] + 5'-deoxyadenosine + L-methionine + H(+). It functions in the pathway organosulfur degradation; alkanesulfonate degradation. Involved in the degradation of the organosulfur compound 2(S)-dihydroxypropanesulfonate (DHPS). Catalyzes activation of the (2S)-3-sulfopropanediol dehydratase HpfG under anaerobic conditions by generation of an organic free radical on a glycine residue. This is (2S)-3-sulfopropanediol dehydratase activating enzyme from Klebsiella oxytoca.